A 760-amino-acid polypeptide reads, in one-letter code: 5-methyltetrahydropteroyltriglutamate--homocysteine methyltransferase (760 aa).

5-methyltetrahydropteroyltri-L-glutamate-binding positions include Arg17–Lys20 and Lys118. Residues Ile436 to Ser438 and Glu489 contribute to the L-homocysteine site. L-methionine contacts are provided by residues Ile436–Ser438 and Glu489. Residues Arg520 to Cys521 and Trp566 contribute to the 5-methyltetrahydropteroyltri-L-glutamate site. Asp604 lines the L-homocysteine pocket. An L-methionine-binding site is contributed by Asp604. Glu610 lines the 5-methyltetrahydropteroyltri-L-glutamate pocket. His646, Cys648, and Glu670 together coordinate Zn(2+). His699 acts as the Proton donor in catalysis. Cys731 contacts Zn(2+).

The protein belongs to the vitamin-B12 independent methionine synthase family. The cofactor is Zn(2+).

The catalysed reaction is 5-methyltetrahydropteroyltri-L-glutamate + L-homocysteine = tetrahydropteroyltri-L-glutamate + L-methionine. The protein operates within amino-acid biosynthesis; L-methionine biosynthesis via de novo pathway; L-methionine from L-homocysteine (MetE route): step 1/1. Functionally, catalyzes the transfer of a methyl group from 5-methyltetrahydrofolate to homocysteine resulting in methionine formation. The sequence is that of 5-methyltetrahydropteroyltriglutamate--homocysteine methyltransferase from Vibrio harveyi (Beneckea harveyi).